Reading from the N-terminus, the 315-residue chain is MVNKKINIALIGSGNIGTDLMIKALRSSTLNPVWMVGIDENSDGLKRAKALGLKTTHLGIDELLTHIEADNIQIAFDATSAYVHEENNRKLQSKGVKVIDLTPAAIGPYCIPPVNLESLLSQTENQTQINDGSISGNLNMVTCGGQATIPIIAAISRVQSVDYGEIVATIASKSAGPGTRKNIDEFTRTTADAIEQIGGARQGKAIIVMNPAEPPLMMRDTVHCLTQDEPDVEAITASVLSMIEQVQEYVPGYRLKNGPVFDGNRVSVFLEVAGLGDYLPEYAGNLDIMTSAALCTGEMLARNLRSNMSVKDSHH.

13–16 (SGNI) serves as a coordination point for NAD(+). C143 serves as the catalytic Acyl-thioester intermediate. NAD(+) contacts are provided by residues 174–182 (SAGPGTRKN) and N285.

It belongs to the acetaldehyde dehydrogenase family.

It catalyses the reaction acetaldehyde + NAD(+) + CoA = acetyl-CoA + NADH + H(+). The sequence is that of Acetaldehyde dehydrogenase from Shewanella woodyi (strain ATCC 51908 / MS32).